The chain runs to 1960 residues: Nuclear pore complex protein Nup98-Nup96 (1960 aa).

46 repeat units span residues 2–3 (FG), 9–10 (FG), 18–19 (FG), 30–31 (FG), 35–36 (FG), 43–44 (FG), 59–60 (FG), 73–74 (FG), 81–82 (FG), 92–93 (FG), 105–106 (FG), 117–118 (FG), 125–126 (FG), 135–136 (FG), 148–149 (FG), 160–161 (FG), 163–164 (FG), 174–175 (FG), 264–265 (FG), 266–267 (FG), 282–283 (FG), 293–294 (FG), 304–305 (FG), 309–310 (FG), 319–320 (FG), 333–334 (FG), 352–353 (FG), 358–359 (FG), 365–366 (FG), 377–378 (FG), 384–385 (FG), 387–388 (FG), 400–401 (FG), 413–414 (FG), 426–427 (FG), 428–429 (FG), 441–442 (FG), 454–455 (FG), 467–468 (FG), 493–494 (FG), 496–497 (FG), 516–517 (FG), 527–528 (FG), 546–547 (FG), 553–554 (FG), and 565–566 (FG). The interval 2–566 (FGGAKPSFGA…GGSLGGGGFG (565 aa)) is 46 X 2 AA repeats of F-G. Disordered stretches follow at residues 698 to 768 (KSVE…WLHP) and 781 to 860 (TGMD…AANQ). Polar residues predominate over residues 704–718 (NPSSSIGSAPNTPQS). Over residues 755-768 (ESQDNGRRESWLHP) the composition is skewed to basic and acidic residues. 2 stretches are compositionally biased toward polar residues: residues 781 to 794 (TGMDQGSPHNSTLN) and 806 to 850 (RPSS…SNRS). Residues 886 to 1028 (RVGYYTIPSL…GSWVFRVKHF (143 aa)) form the Peptidase S59 domain. Serine 1029 (nucleophile) is an active-site residue.

The protein belongs to the nucleoporin GLFG family. As to quaternary structure, part of the nuclear pore complex (NPC). Interacts with Rae1. Nuclear pore complex protein Nup98: Interacts with pzg and Chro. Interacts with MBD-R2; the interaction allows Nup98 recruitment to chromatin. Interacts with Trx. Interacts with Wds. Interacts with Mgtor and Cp190. Upon ecdysone stimulation, interacts with EcR, CTCF, su(Hw) and Trl. Post-translationally, isoform A and isoform C are autoproteolytically cleaved to yield Nup98 and Nup96 or Nup98 only, respectively. In terms of tissue distribution, expressed in brain.

It is found in the chromosome. It localises to the nucleus. The protein localises to the nucleoplasm. The protein resides in the nucleus membrane. Its subcellular location is the nuclear pore complex. Its function is as follows. Part of the nuclear pore complex (NPC). Required for MAD import as part of the Nup107-160 complex and required for nuclear export of Moe probably via its association with Rae1. Plays a role in nuclear mRNA export. Promotes cell antiviral response by up-regulating FoxK-dependent antiviral gene transcription. In germline stem cells, involved in their maintenance and division together with the TGF-Beta and EGFR signaling pathways. In larval lymph glands, has a role in the maintenance of hematopoiesis by regulating Pvr expression. Functionally, part of the nuclear pore complex (NPC). In the nucleoplasm, binds to transcriptionally active chromatin with a preference for regulatory regions; co-localizes with RNA polymerase II in a RNA-independent manner and before transition into transcription elongation. Plays a role in the transcriptional memory process by stabilizing enhancer-promoter loops and by mediating anchoring of chromatin to the nuclear pore complex region. During larval development, interacts with trx and MBD-R2 and regulates transcription of developmental genes including ecdysone-responsive genes such as Eip74 and E23. In terms of biological role, part of the nuclear pore complex (NPC). The sequence is that of Nuclear pore complex protein Nup98-Nup96 from Drosophila melanogaster (Fruit fly).